The chain runs to 126 residues: RxLR effector protein BLR31 (126 aa).

An N-terminal signal peptide occupies residues 1–22; it reads MLLSRAISVLALLACIRCGVHA. Positions 44–58 match the RxLR-dEER motif; the sequence is RLLRTSVDFKDSEER.

It belongs to the RxLR effector family.

The protein resides in the secreted. It is found in the host cell. Functionally, secreted effector that triggers a hypersensitive response (HR) in 3 Lactuca saligna accessions (CGN05947, CGN05310, CGN05304). In Bremia lactucae (Lettuce downy mildew), this protein is RxLR effector protein BLR31.